A 104-amino-acid polypeptide reads, in one-letter code: Large ribosomal subunit protein uL24 (104 aa).

Belongs to the universal ribosomal protein uL24 family. Part of the 50S ribosomal subunit.

Its function is as follows. One of two assembly initiator proteins, it binds directly to the 5'-end of the 23S rRNA, where it nucleates assembly of the 50S subunit. One of the proteins that surrounds the polypeptide exit tunnel on the outside of the subunit. The polypeptide is Large ribosomal subunit protein uL24 (Azotobacter vinelandii (strain DJ / ATCC BAA-1303)).